Here is a 562-residue protein sequence, read N- to C-terminus: Protein FAM83D-A (562 aa).

The segment at 424–471 (ITTQTTETSQCTTQTPAPTSSVARLSNSSNSSSSSFSSTSITSTGSNC) is disordered. A compositionally biased stretch (low complexity) spans 425-471 (TTQTTETSQCTTQTPAPTSSVARLSNSSNSSSSSFSSTSITSTGSNC).

It belongs to the FAM83 family.

Its subcellular location is the cytoplasm. It is found in the cytoskeleton. The protein localises to the spindle. It localises to the spindle pole. In terms of biological role, may regulate cell proliferation, growth, migration and epithelial to mesenchymal transition. May also be important for proper chromosome congression and alignment during mitosis. The chain is Protein FAM83D-A from Xenopus laevis (African clawed frog).